The following is a 184-amino-acid chain: Cell wall protein phiA (184 aa).

The N-terminal stretch at 1 to 21 (MQLKNLIFAAATAAALPATDA) is a signal peptide. Asn-58 is a glycosylation site (N-linked (GlcNAc...) asparagine).

The protein belongs to the phiA family.

Its subcellular location is the secreted. It localises to the cell wall. Cell wall protein involved in development of asexual structures such as phialide and conidium development, and thus required for spore formation. Plays a role as a general stress protectant produced by the fungus in competition with antagonistic bacteria. This is Cell wall protein phiA from Aspergillus niger (strain ATCC MYA-4892 / CBS 513.88 / FGSC A1513).